Consider the following 215-residue polypeptide: Large ribosomal subunit protein uL3c (215 aa).

Positions 132–151 are disordered; sequence RGAMSHGSKSHRRPGSIGAG.

This sequence belongs to the universal ribosomal protein uL3 family. As to quaternary structure, part of the 50S ribosomal subunit.

It localises to the plastid. It is found in the chloroplast. One of the primary rRNA binding proteins, it binds directly near the 3'-end of the 23S rRNA, where it nucleates assembly of the 50S subunit. This chain is Large ribosomal subunit protein uL3c (rpl3), found in Cyanidium caldarium (Red alga).